The primary structure comprises 457 residues: tRNA-2-methylthio-N(6)-dimethylallyladenosine synthase (457 aa).

The MTTase N-terminal domain occupies 4 to 119 (RNFHIITFGC…APDAIERLYA (116 aa)). [4Fe-4S] cluster is bound by residues C13, C48, C82, C164, C168, and C171. Residues 150–385 (NTLALMAYVN…QATQLEHSTS (236 aa)) enclose the Radical SAM core domain. Positions 388–456 (KSRVGVETTV…KHSLVAEPLI (69 aa)) constitute a TRAM domain.

The protein belongs to the methylthiotransferase family. MiaB subfamily. In terms of assembly, monomer. [4Fe-4S] cluster serves as cofactor.

It is found in the cytoplasm. The enzyme catalyses N(6)-dimethylallyladenosine(37) in tRNA + (sulfur carrier)-SH + AH2 + 2 S-adenosyl-L-methionine = 2-methylsulfanyl-N(6)-dimethylallyladenosine(37) in tRNA + (sulfur carrier)-H + 5'-deoxyadenosine + L-methionine + A + S-adenosyl-L-homocysteine + 2 H(+). Its function is as follows. Catalyzes the methylthiolation of N6-(dimethylallyl)adenosine (i(6)A), leading to the formation of 2-methylthio-N6-(dimethylallyl)adenosine (ms(2)i(6)A) at position 37 in tRNAs that read codons beginning with uridine. The chain is tRNA-2-methylthio-N(6)-dimethylallyladenosine synthase from Lawsonia intracellularis (strain PHE/MN1-00).